The chain runs to 321 residues: MKGRNWNQASVAKLFELPFFELLYKAYETHRSHFDVRDMELCTLSSIKTGTCPEDCAYCPQSGHYKTDVEREKLINLEAVLEQAKVAKENGARRFCMGAAWRSPPKRELPKVLEMIKSVKALGLETCVTLGMLDQEQALQLKEAGLDFYNHNLDTSPEFYKKIITTRTYQDRMETLKNVRNAGINVCCGGILGMGESRADRIQLLLELYQLPEPPTSIPINQLIPIKGTPLENTKAIDPFEFIKTIAITRLLFPTSVIRLSAGREAMSDELQAWCFMAGANSIFYGDKLLTAKNPGQNRDVNLLKKLGLKVPVLTEEYACY.

The 228-residue stretch at 37–264 (RDMELCTLSS…TSVIRLSAGR (228 aa)) folds into the Radical SAM core domain. [4Fe-4S] cluster contacts are provided by Cys-52, Cys-56, and Cys-59. Positions 96, 127, 187, and 259 each coordinate [2Fe-2S] cluster.

This sequence belongs to the radical SAM superfamily. Biotin synthase family. As to quaternary structure, homodimer. [4Fe-4S] cluster is required as a cofactor. It depends on [2Fe-2S] cluster as a cofactor.

The enzyme catalyses (4R,5S)-dethiobiotin + (sulfur carrier)-SH + 2 reduced [2Fe-2S]-[ferredoxin] + 2 S-adenosyl-L-methionine = (sulfur carrier)-H + biotin + 2 5'-deoxyadenosine + 2 L-methionine + 2 oxidized [2Fe-2S]-[ferredoxin]. It functions in the pathway cofactor biosynthesis; biotin biosynthesis; biotin from 7,8-diaminononanoate: step 2/2. Its function is as follows. Catalyzes the conversion of dethiobiotin (DTB) to biotin by the insertion of a sulfur atom into dethiobiotin via a radical-based mechanism. The polypeptide is Biotin synthase (Coxiella burnetii (strain CbuK_Q154) (Coxiella burnetii (strain Q154))).